Here is a 144-residue protein sequence, read N- to C-terminus: Arginine decarboxylase proenzyme (144 aa).

S80 functions as the Schiff-base intermediate with substrate; via pyruvic acid in the catalytic mechanism. Residue S80 is modified to Pyruvic acid (Ser); by autocatalysis. Catalysis depends on H85, which acts as the Proton acceptor; for processing activity. The active-site Proton donor; for catalytic activity is the C100.

This sequence belongs to the prokaryotic AdoMetDC family. Type 1 subfamily. As to quaternary structure, heterooctamer of four alpha and four beta chains arranged as a tetramer of alpha/beta heterodimers. Pyruvate is required as a cofactor. Is synthesized initially as an inactive proenzyme. Formation of the active enzyme involves a self-maturation process in which the active site pyruvoyl group is generated from an internal serine residue via an autocatalytic post-translational modification. Two non-identical subunits are generated from the proenzyme in this reaction, and the pyruvate is formed at the N-terminus of the alpha chain, which is derived from the carboxyl end of the proenzyme. The post-translation cleavage follows an unusual pathway, termed non-hydrolytic serinolysis, in which the side chain hydroxyl group of the serine supplies its oxygen atom to form the C-terminus of the beta chain, while the remainder of the serine residue undergoes an oxidative deamination to produce ammonia and the pyruvoyl group blocking the N-terminus of the alpha chain.

It carries out the reaction L-arginine + H(+) = agmatine + CO2. It functions in the pathway amine and polyamine biosynthesis; agmatine biosynthesis; agmatine from L-arginine: step 1/1. Its function is as follows. Specifically catalyzes the decarboxylation of L-arginine to agmatine. Has no S-adenosylmethionine decarboxylase (AdoMetDC) activity. The protein is Arginine decarboxylase proenzyme of Ignicoccus hospitalis (strain KIN4/I / DSM 18386 / JCM 14125).